The following is an 806-amino-acid chain: MADFLNFPRQMLPFSKKTKQWRKDCLLWANQKTFFNYSLVRKSVIHKKINYDLLNGRLHMSDLELVLNPDGIKAAYIPDRLQHYPIMNSKLNVLRGEESKRVFDFKVVVTNPNAISEIEDNKKNELLQRLQEMITDTSISEDEYNIKLEKLNDYYTYEWQDIREVRANELLNHYIKEYDIPLIFNNGFMDAMTCGEEIYQCDIVGGEPVIERVNPLKIRIFKSGYSNKVEDADMIILEDYWSPGRVIDTYYDVLSPKDIKYIETMPDYIGQGAVDQMDNIDERYGFVNQNMIGDEITVRDGTYFFDPANLFTEGIANSLLPYDLAGNLRVLRLYWKSKRKILKVKSYDPETGEEEWNFYPENYVVNKEAGEEVQSFWVNEAWEGTMIGNEIFVNMRPRLIQYNRLNNPSRCHFGIVGSIYNLNDSRPFSLVDMMKPYNYLYDAIHDRLNKAIASNWGSILELDLSKVPKGWDVGKWMYYARVNHIAVIDSFKEGTIGASTGKLAGALNNAGKGMIETNIGNYIQQQINLLEFIKMEMADVAGISKQREGQISQRETVGGVERATLQSSHITEWLFTIHDDVKKRALECFLETAKVALKGRNKKFQYILSDTSTRVMEIDGDEFAEADYGLVVDNSNGTQELQQKLDTLAQAALQTQTLSFSTITKLYTSSSLAEKQRLIEKDEKQIRERQAQAQKEQLEAQQQIAAMQQQQKEAELLQKEEANIRDNQTKIIIAQIQSEGGPDEEDGIMIDDYSPEAKANLAEKIREFDEKLKLDKDKLKLDKKKAETDASIKRQALRKKSSTTNK.

Residues 337–380 (SKRKILKVKSYDPETGEEEWNFYPENYVVNKEAGEEVQSFWVNE) are interaction with Cargo protein 1. Positions 783–792 (KKKAETDASI) are enriched in basic and acidic residues. A disordered region spans residues 783–806 (KKKAETDASIKRQALRKKSSTTNK). Over residues 795 to 806 (QALRKKSSTTNK) the composition is skewed to basic residues.

Homododecamer. Interacts with the Cargo protein 1. Interacts with the major capsid protein.

It localises to the virion. In terms of biological role, forms the portal vertex of the capsid. Probably involved in head assembly, genome packaging, tail attachment, and genome ejection. The sequence is that of Portal protein from Bacteroides phage crAss001 (Bacteroides phage PhiCrAss001).